Here is a 474-residue protein sequence, read N- to C-terminus: Alginate biosynthesis protein AlgX (474 aa).

The N-terminal stretch at 1 to 26 is a signal peptide; it reads MKTRTSRLFRLSALAAGLCLAQAALA. The segment at 27–347 is SGNH hydrolase-like domain; that stretch reads ADPGAAPSYQ…QAMPLVDNGC (321 aa). A disulfide bond links Cys44 and Cys229. Asp174 is a catalytic residue. Residue His176 is the Proton acceptor of the active site. The Nucleophile role is filled by Ser269. The cysteines at positions 347 and 460 are disulfide-linked. The segment at 348 to 474 is CBM domain; the sequence is SGRKTVLSRK…AKASQSVAGR (127 aa).

It belongs to the AlgX family. Monomer. Interacts with AlgK and MucD.

It is found in the periplasm. The protein operates within glycan biosynthesis; alginate biosynthesis. Functionally, plays two roles in the biosynthesis of the exopolysaccharide alginate: protects alginate from degradation as the polymer traverses the periplasm, and also plays a role in its O-acetylation. Acetylation of alginate causes the cells in the biofilm to adhere better to lung epithelium, form microcolonies, and resist the effects of the host immune system and/or antibiotics. Displays a low acetylesterase activity in vitro using a pseudosubstrate, 3-carboxyumbelliferyl acetate. Probably has acetyltransferase activity in vivo. The chain is Alginate biosynthesis protein AlgX (algX) from Pseudomonas aeruginosa (strain ATCC 15692 / DSM 22644 / CIP 104116 / JCM 14847 / LMG 12228 / 1C / PRS 101 / PAO1).